The following is a 269-amino-acid chain: 4-hydroxy-tetrahydrodipicolinate reductase (269 aa).

NAD(+) contacts are provided by residues 13–18 (GASGRM) and aspartate 39. Arginine 40 lines the NADP(+) pocket. NAD(+) is bound by residues 101–103 (GTT) and 125–128 (APNM). Histidine 158 acts as the Proton donor/acceptor in catalysis. Histidine 159 serves as a coordination point for (S)-2,3,4,5-tetrahydrodipicolinate. Lysine 162 serves as the catalytic Proton donor. 168-169 (GT) contributes to the (S)-2,3,4,5-tetrahydrodipicolinate binding site.

It belongs to the DapB family.

Its subcellular location is the cytoplasm. It carries out the reaction (S)-2,3,4,5-tetrahydrodipicolinate + NAD(+) + H2O = (2S,4S)-4-hydroxy-2,3,4,5-tetrahydrodipicolinate + NADH + H(+). The catalysed reaction is (S)-2,3,4,5-tetrahydrodipicolinate + NADP(+) + H2O = (2S,4S)-4-hydroxy-2,3,4,5-tetrahydrodipicolinate + NADPH + H(+). It functions in the pathway amino-acid biosynthesis; L-lysine biosynthesis via DAP pathway; (S)-tetrahydrodipicolinate from L-aspartate: step 4/4. Its function is as follows. Catalyzes the conversion of 4-hydroxy-tetrahydrodipicolinate (HTPA) to tetrahydrodipicolinate. The polypeptide is 4-hydroxy-tetrahydrodipicolinate reductase (Bordetella bronchiseptica (strain ATCC BAA-588 / NCTC 13252 / RB50) (Alcaligenes bronchisepticus)).